Reading from the N-terminus, the 347-residue chain is Fructose-1,6-bisphosphatase (347 aa).

AMP contacts are provided by residues isoleucine 19 to glutamine 23 and serine 44 to serine 48. Mg(2+)-binding residues include aspartate 85 and glutamate 114. Residue serine 127 to tyrosine 128 coordinates AMP. 3 residues coordinate Mg(2+): aspartate 133, isoleucine 135, and aspartate 136. Aspartate 136 to serine 139 is a substrate binding site. Lysine 155 is an AMP binding site. Substrate is bound by residues asparagine 227–tyrosine 230, arginine 258–methionine 263, tyrosine 279, and lysine 288–arginine 290. Glutamate 294 is a binding site for Mg(2+).

Belongs to the FBPase class 1 family. As to quaternary structure, homotetramer. Mg(2+) serves as cofactor.

It catalyses the reaction beta-D-fructose 1,6-bisphosphate + H2O = beta-D-fructose 6-phosphate + phosphate. It participates in carbohydrate biosynthesis; gluconeogenesis. Its activity is regulated as follows. Subject to complex allosteric regulation. The enzyme can assume an active R-state, or an inactive T-state. Intermediate conformations may exist. AMP acts as allosteric inhibitor. AMP binding affects the turnover of bound substrate and not the affinity for substrate. The polypeptide is Fructose-1,6-bisphosphatase (fbp1) (Schizosaccharomyces pombe (strain 972 / ATCC 24843) (Fission yeast)).